A 243-amino-acid chain; its full sequence is UPF0280 protein Memar_1519 (243 aa).

It belongs to the UPF0280 family.

In Methanoculleus marisnigri (strain ATCC 35101 / DSM 1498 / JR1), this protein is UPF0280 protein Memar_1519.